Here is a 236-residue protein sequence, read N- to C-terminus: MLSKGLKRKREEEETMEALSVDSCWLDPSHPAVAQTPPTVASSSLFDLSVVKLHHSLRQSEPDLRHLVLVVNTLRRIQASMEPAPVLPPEPIQPPAPSVADSLLASSDAGLSASMASLLEDLNHIEDLNQAPQPQADEGPPGRSIGGISPNLGALDLLGPATGCLLDDGLEGLFEDIDTSMYDSELWLPASEGLKPGPENGPAKEEPPELDEAELDYLMDVLVGTQALERPPGPGR.

Positions 38-85 (PTVASSSLFDLSVVKLHHSLRQSEPDLRHLVLVVNTLRRIQASMEPAP) constitute an SERTA domain. The tract at residues 190–211 (ASEGLKPGPENGPAKEEPPELD) is disordered.

As to quaternary structure, interacts with the PHD-bromodomain of TIF1, TRIM28/TIF1B and p300/CBP. Interacts with E2F1 and TFDP1; modulates transactivation activity of TFDP1/E2F complexes. Also interacts with CDK4. Post-translationally, polyubiquitinated, which promotes proteasomal degradation. In terms of tissue distribution, detected at in testis, lung and, at lower levels, in muscle, liver, spleen, brain and heart.

In terms of biological role, acts at E2F-responsive promoters as coregulator to integrate signals provided by PHD- and/or bromodomain-containing transcription factors. Stimulates E2F1/TFDP1 transcriptional activity. Renders the activity of cyclin D1/CDK4 resistant to the inhibitory effects of CDKN2A/p16INK4A. This Mus musculus (Mouse) protein is SERTA domain-containing protein 1 (Sertad1).